Here is a 472-residue protein sequence, read N- to C-terminus: 3-isopropylmalate dehydratase large subunit (472 aa).

[4Fe-4S] cluster-binding residues include Cys347, Cys407, and Cys410.

The protein belongs to the aconitase/IPM isomerase family. LeuC type 1 subfamily. Heterodimer of LeuC and LeuD. [4Fe-4S] cluster serves as cofactor.

It carries out the reaction (2R,3S)-3-isopropylmalate = (2S)-2-isopropylmalate. Its pathway is amino-acid biosynthesis; L-leucine biosynthesis; L-leucine from 3-methyl-2-oxobutanoate: step 2/4. In terms of biological role, catalyzes the isomerization between 2-isopropylmalate and 3-isopropylmalate, via the formation of 2-isopropylmaleate. This Bacillus subtilis (strain 168) protein is 3-isopropylmalate dehydratase large subunit.